Here is a 214-residue protein sequence, read N- to C-terminus: MPEILKVKPTRMELLKLKRRVKLAERGHKLLKEKQDALIMEFFTIYDEALSMRRELIKKIGEAFEALRLAQVEVGSVRLKEIAIGVNPNKEIEVRSRNIMGVRVPLIEVPELKRKPSERGYAFISTSSAVDVAAEKFEEVLELAIRLAEVEESLKRLGKEIEKTKRRVNALEYIIIPRMKNTIKFIEQHLDEMERENFFRLKRIKALLEARESM.

Belongs to the V-ATPase D subunit family. Has multiple subunits with at least A(3), B(3), C, D, E, F, H, I and proteolipid K(x).

The protein resides in the cell membrane. Functionally, component of the A-type ATP synthase that produces ATP from ADP in the presence of a proton gradient across the membrane. The polypeptide is A-type ATP synthase subunit D (Pyrococcus furiosus (strain ATCC 43587 / DSM 3638 / JCM 8422 / Vc1)).